A 473-amino-acid polypeptide reads, in one-letter code: Argininosuccinate lyase (473 aa).

This sequence belongs to the lyase 1 family. Argininosuccinate lyase subfamily.

It localises to the cytoplasm. The enzyme catalyses 2-(N(omega)-L-arginino)succinate = fumarate + L-arginine. Its pathway is amino-acid biosynthesis; L-arginine biosynthesis; L-arginine from L-ornithine and carbamoyl phosphate: step 3/3. The polypeptide is Argininosuccinate lyase (Bordetella pertussis (strain Tohama I / ATCC BAA-589 / NCTC 13251)).